The primary structure comprises 999 residues: Bifunctional glutamine synthetase adenylyltransferase/adenylyl-removing enzyme (999 aa).

The adenylyl removase stretch occupies residues 1-483 (MTPGRRSSTF…LHEKLFYRPL (483 aa)). Positions 489–999 (QLAPGEARLS…RTVVEDLFYA (511 aa)) are adenylyl transferase.

It belongs to the GlnE family. Mg(2+) serves as cofactor.

It carries out the reaction [glutamine synthetase]-O(4)-(5'-adenylyl)-L-tyrosine + phosphate = [glutamine synthetase]-L-tyrosine + ADP. The enzyme catalyses [glutamine synthetase]-L-tyrosine + ATP = [glutamine synthetase]-O(4)-(5'-adenylyl)-L-tyrosine + diphosphate. In terms of biological role, adenylation and deadenylation of glutamate--ammonia ligase. Functionally, involved in the regulation of glutamine synthetase GlnA, a key enzyme in the process to assimilate ammonia. When cellular nitrogen levels are high, the C-terminal adenylyl transferase (AT) inactivates GlnA by covalent transfer of an adenylyl group from ATP to specific tyrosine residue of GlnA, thus reducing its activity. Conversely, when nitrogen levels are low, the N-terminal adenylyl removase (AR) activates GlnA by removing the adenylyl group by phosphorolysis, increasing its activity. The regulatory region of GlnE binds the signal transduction protein PII (GlnB) which indicates the nitrogen status of the cell. This Streptomyces coelicolor (strain ATCC BAA-471 / A3(2) / M145) protein is Bifunctional glutamine synthetase adenylyltransferase/adenylyl-removing enzyme.